The following is an 83-amino-acid chain: U5-theraphotoxin-Hs1a 5 (83 aa).

The first 21 residues, 1-21 (MKTSMFLTLTGLVLLFVVCYA), serve as a signal peptide directing secretion. Residues 22–49 (SESEEKEFPKELPSSIFAADSDFKVEER) constitute a propeptide that is removed on maturation. Intrachain disulfides connect Cys-51–Cys-63, Cys-56–Cys-68, and Cys-62–Cys-75.

This sequence belongs to the neurotoxin 10 (Hwtx-1) family. 51 (Hntx-8) subfamily. Hntx-8 sub-subfamily. In terms of tissue distribution, expressed by the venom gland.

The protein resides in the secreted. In terms of biological role, agglutinates erythrocytes. The sequence is that of U5-theraphotoxin-Hs1a 5 from Cyriopagopus schmidti (Chinese bird spider).